Reading from the N-terminus, the 45-residue chain is Iota-conotoxin-like R11.10 (45 aa).

Cystine bridges form between cysteine 5–cysteine 19, cysteine 12–cysteine 22, cysteine 18–cysteine 27, and cysteine 21–cysteine 36. At leucine 43 the chain carries D-leucine. Residue arginine 45 is a propeptide, removed by a carboxypeptidase.

This sequence belongs to the conotoxin I1 superfamily. As to expression, expressed by the venom duct.

Its subcellular location is the secreted. Functionally, iota-conotoxins bind to voltage-gated sodium channels (Nav) and act as agonists by shifting the voltage-dependence of activation to more hyperpolarized levels. Produces general excitatory symptoms. The chain is Iota-conotoxin-like R11.10 from Conus radiatus (Rayed cone).